The sequence spans 546 residues: Serine/threonine-protein kinase Chk2 (546 aa).

Residues 1 to 70 (MKSHHQSHSS…SSHSSSGTLS (70 aa)) are disordered. Residues 8–70 (HSSTSSKAHD…SSHSSSGTLS (63 aa)) show a composition bias toward low complexity. The residue at position 68 (Thr-68) is a Phosphothreonine; by MAP3K20. Ser-71 is modified (phosphoserine; by PLK3). Thr-77 is subject to Phosphothreonine; by ATM and MAP3K20. Ser-82 carries the phosphoserine; by PLK3 modification. One can recognise an FHA domain in the interval 117 to 179 (YWFGRDKSCE…NGTFVNTELI (63 aa)). Residues 224 to 490 (YIMSKTLGSG…TEEALNHPWL (267 aa)) form the Protein kinase domain. ATP-binding positions include 231–238 (GSGACGEV), Lys-253, and 306–312 (ELMEGGE). Asp-351 functions as the Proton acceptor in the catalytic mechanism. Residues 355-356 (EN) and Asp-372 each bind ATP. Residues 372–398 (DFGQSKILGETSLMRTLCGTPTYLAPE) are T-loop/activation segment. Position 383 is a phosphoserine; by autocatalysis (Ser-383). Thr-387 and Thr-391 each carry phosphothreonine; by autocatalysis. Ser-460 carries the phosphoserine modification.

Belongs to the protein kinase superfamily. CAMK Ser/Thr protein kinase family. CHK2 subfamily. As to quaternary structure, homodimer. Homodimerization is part of the activation process but the dimer may dissociate following activation. Interacts with PML. Interacts with TP53. Interacts with RB1; phosphorylates RB1. Interacts with BRCA1. Interacts (phosphorylated at Thr-68) with MDC1; requires ATM-mediated phosphorylation of CHEK2. Interacts with TP53BP1; modulates CHEK2 phosphorylation at Thr-68 in response to ionizing radiation. Interacts with CDC25A; phosphorylates CDC25A and mediates its degradation in response to ionizing radiation. Interacts with CUL1; mediates CHEK2 ubiquitination and regulation. Interacts with CDKN2AIP. Interacts (via protein kinase domain) with CCAR2 (via N-terminus). Interacts with SIRT1. Requires Mg(2+) as cofactor. In terms of processing, phosphorylated. Phosphorylated at Ser-82 by PLK3 in response to DNA damage, promoting phosphorylation at Thr-77 by ATM and the G2/M transition checkpoint. Phosphorylation at Thr-77 induces homodimerization. Autophosphorylates at Thr-387 and Thr-391 in the T-loop/activation segment upon dimerization to become fully active. DNA damage-induced autophosphorylation at Ser-383 induces CUL1-mediated ubiquitination and regulates the pro-apoptotic function. Phosphorylation at Ser-460 also regulates ubiquitination. Phosphorylated by PLK4. Post-translationally, ubiquitinated. CUL1-mediated ubiquitination regulates the pro-apoptotic function. Ubiquitination may also regulate protein stability. Ubiquitinated by RNF8 via 'Lys-48'-linked ubiquitination. Ubiquitously expressed with higher levels in the thymus, spleen and colon (at protein level).

The protein resides in the nucleus. It is found in the PML body. The protein localises to the nucleoplasm. The catalysed reaction is L-seryl-[protein] + ATP = O-phospho-L-seryl-[protein] + ADP + H(+). It carries out the reaction L-threonyl-[protein] + ATP = O-phospho-L-threonyl-[protein] + ADP + H(+). With respect to regulation, activated through phosphorylation at Thr-68 by ATM in response to DNA double-strand breaks. Activation is modulated by several mediators including MDC1 and TP53BP1. Induces homodimerization with exchange of the T-loop/activation segment between protomers and transphosphorylation of the protomers. The autophosphorylated kinase dimer is fully active. Negatively regulated by PPM1D through dephosphorylation of Thr-68. In terms of biological role, serine/threonine-protein kinase which is required for checkpoint-mediated cell cycle arrest, activation of DNA repair and apoptosis in response to the presence of DNA double-strand breaks. May also negatively regulate cell cycle progression during unperturbed cell cycles. Following activation, phosphorylates numerous effectors preferentially at the consensus sequence [L-X-R-X-X-S/T]. Regulates cell cycle checkpoint arrest through phosphorylation of CDC25A, CDC25B and CDC25C, inhibiting their activity. Inhibition of CDC25 phosphatase activity leads to increased inhibitory tyrosine phosphorylation of CDK-cyclin complexes and blocks cell cycle progression. May also phosphorylate NEK6 which is involved in G2/M cell cycle arrest. Regulates DNA repair through phosphorylation of BRCA2, enhancing the association of RAD51 with chromatin which promotes DNA repair by homologous recombination. Also stimulates the transcription of genes involved in DNA repair (including BRCA2) through the phosphorylation and activation of the transcription factor FOXM1. Regulates apoptosis through the phosphorylation of p53/TP53, MDM4 and PML. Phosphorylation of p53/TP53 at 'Ser-20' by CHEK2 may alleviate inhibition by MDM2, leading to accumulation of active p53/TP53. Phosphorylation of MDM4 may also reduce degradation of p53/TP53. Also controls the transcription of pro-apoptotic genes through phosphorylation of the transcription factor E2F1. Tumor suppressor, it may also have a DNA damage-independent function in mitotic spindle assembly by phosphorylating BRCA1. Its absence may be a cause of the chromosomal instability observed in some cancer cells. Promotes the CCAR2-SIRT1 association and is required for CCAR2-mediated SIRT1 inhibition. Under oxidative stress, promotes ATG7 ubiquitination by phosphorylating the E3 ubiquitin ligase TRIM32 at 'Ser-56' leading to positive regulation of the autophagosme assembly. This Mus musculus (Mouse) protein is Serine/threonine-protein kinase Chk2.